Reading from the N-terminus, the 364-residue chain is Fructose-bisphosphate aldolase A (364 aa).

A Phosphotyrosine modification is found at tyrosine 5. At threonine 9 the chain carries Phosphothreonine. Phosphoserine occurs at positions 36 and 39. N6-acetyllysine; alternate is present on lysine 42. Residue lysine 42 forms a Glycyl lysine isopeptide (Lys-Gly) (interchain with G-Cter in SUMO1); alternate linkage. Lysine 42 participates in a covalent cross-link: Glycyl lysine isopeptide (Lys-Gly) (interchain with G-Cter in SUMO2); alternate. Residue arginine 43 coordinates beta-D-fructose 1,6-bisphosphate. Serine 46 carries the post-translational modification Phosphoserine. Lysine 99 carries the post-translational modification N6-(2-hydroxyisobutyryl)lysine. Position 108 is an N6-acetyllysine (lysine 108). Position 111 is an N6-acetyllysine; alternate (lysine 111). N6-malonyllysine; alternate is present on lysine 111. At serine 132 the chain carries Phosphoserine. Lysine 147 carries the N6-(2-hydroxyisobutyryl)lysine modification. Glutamate 188 functions as the Proton acceptor in the catalytic mechanism. Catalysis depends on lysine 230, which acts as the Schiff-base intermediate with dihydroxyacetone-P. A Phosphoserine modification is found at serine 272. Residues 272-274 (SGG), serine 301, and arginine 304 contribute to the beta-D-fructose 1,6-bisphosphate site. Lysine 312 is modified (N6-malonyllysine). Lysine 330 carries the N6-acetyllysine modification.

The protein belongs to the class I fructose-bisphosphate aldolase family. In terms of assembly, homotetramer. Interacts with SNX9 and WAS. Interacts with FBP2; the interaction blocks FBP2 inhibition by physiological concentrations of AMP and reduces inhibition by Ca(2+).

It is found in the cytoplasm. It localises to the myofibril. The protein resides in the sarcomere. The protein localises to the i band. Its subcellular location is the m line. It carries out the reaction beta-D-fructose 1,6-bisphosphate = D-glyceraldehyde 3-phosphate + dihydroxyacetone phosphate. It participates in carbohydrate degradation; glycolysis; D-glyceraldehyde 3-phosphate and glycerone phosphate from D-glucose: step 4/4. Its function is as follows. Catalyzes the reversible conversion of beta-D-fructose 1,6-bisphosphate (FBP) into two triose phosphate and plays a key role in glycolysis and gluconeogenesis. In addition, may also function as scaffolding protein. In Pan troglodytes (Chimpanzee), this protein is Fructose-bisphosphate aldolase A (ALDOA).